The primary structure comprises 590 residues: Asparagine synthetase [glutamine-hydrolyzing] (590 aa).

Residue C2 is the For GATase activity of the active site. One can recognise a Glutamine amidotransferase type-2 domain in the interval 2-185 (CGILAVLGCS…PGNLYSSRSG (184 aa)). Residues 50–54 (RLAII), 75–77 (NGE), and D98 each bind L-glutamine. The Asparagine synthetase domain maps to 193 to 516 (PQWYNETIPS…PQNSARFTVP (324 aa)). ATP is bound by residues L231, V267, and 341-342 (SG).

The enzyme catalyses L-aspartate + L-glutamine + ATP + H2O = L-asparagine + L-glutamate + AMP + diphosphate + H(+). It functions in the pathway amino-acid biosynthesis; L-asparagine biosynthesis; L-asparagine from L-aspartate (L-Gln route): step 1/1. This Asparagus officinalis (Garden asparagus) protein is Asparagine synthetase [glutamine-hydrolyzing].